A 94-amino-acid polypeptide reads, in one-letter code: Ig kappa-B5 chain V region 2699 (94 aa).

Positions 1–23 (AFELTQTPSSVEAAVGGTVTINC) are framework-1. The tract at residues 24–34 (QASTDISSNLA) is complementarity-determining-1. The segment at 35-49 (WYTPKPGSPPKLLIY) is framework-2. A complementarity-determining-2 region spans residues 50-56 (SASTLAS). The tract at residues 57–82 (GVSSRFKGSGSGVLITLTISDLECGV) is framework-3. Residue S83 is a region of interest, complementarity-determining-3. Positions 84–93 (FGGGTKVVVE) are framework-4.

The sequence is that of Ig kappa-B5 chain V region 2699 from Oryctolagus cuniculus (Rabbit).